A 113-amino-acid chain; its full sequence is Chaperone protein SigE (113 aa).

The protein belongs to the IpgE/SigE chaperone family. As to quaternary structure, homodimer or higher-order oligomers.

It is found in the cytoplasm. In terms of biological role, molecular chaperone required for SopB/SigD stabilization and secretion. This chain is Chaperone protein SigE (sigE), found in Salmonella paratyphi A (strain ATCC 9150 / SARB42).